Reading from the N-terminus, the 331-residue chain is Tagatose 1,6-diphosphate aldolase 2 (331 aa).

Belongs to the aldolase LacD family.

The catalysed reaction is D-tagatofuranose 1,6-bisphosphate = D-glyceraldehyde 3-phosphate + dihydroxyacetone phosphate. It participates in carbohydrate metabolism; D-tagatose 6-phosphate degradation; D-glyceraldehyde 3-phosphate and glycerone phosphate from D-tagatose 6-phosphate: step 2/2. The polypeptide is Tagatose 1,6-diphosphate aldolase 2 (lacD2) (Enterococcus faecalis (strain ATCC 700802 / V583)).